An 86-amino-acid polypeptide reads, in one-letter code: MGSEINDNTIEFDVLKNKEDLTKEILNEVYNSLKEKGYNPINQLVGYLISGDPTYITNYNGARALVRKLERDEILEEVLKSYLGIK.

It belongs to the UPF0297 family.

The protein is UPF0297 protein CA_C1679 of Clostridium acetobutylicum (strain ATCC 824 / DSM 792 / JCM 1419 / IAM 19013 / LMG 5710 / NBRC 13948 / NRRL B-527 / VKM B-1787 / 2291 / W).